Reading from the N-terminus, the 229-residue chain is Ribosome maturation factor RimM (229 aa).

Residues 1-37 (MAGHDSGNAKRGRSPSFGVFVRKPVERTSAKGTSDGA) form a disordered region. Positions 148–229 (ADEFYWVDLI…RVVVDWEADY (82 aa)) constitute a PRC barrel domain.

The protein belongs to the RimM family. As to quaternary structure, binds ribosomal protein uS19.

Its subcellular location is the cytoplasm. Its function is as follows. An accessory protein needed during the final step in the assembly of 30S ribosomal subunit, possibly for assembly of the head region. Essential for efficient processing of 16S rRNA. May be needed both before and after RbfA during the maturation of 16S rRNA. It has affinity for free ribosomal 30S subunits but not for 70S ribosomes. This is Ribosome maturation factor RimM from Burkholderia pseudomallei (strain 668).